A 23-amino-acid polypeptide reads, in one-letter code: Protein DCL, chloroplastic (23 aa).

The protein localises to the plastid. It is found in the chloroplast. In terms of biological role, has a function in the early stage of chloroplast development and palisade cell morphogenesis. The protein is Protein DCL, chloroplastic of Pseudotsuga menziesii (Douglas-fir).